Consider the following 366-residue polypeptide: Palmitoyltransferase ZDHHC2 (366 aa).

Over 1-15 (MAPSGPGGVRRRCRR) the chain is Cytoplasmic. The chain crosses the membrane as a helical span at residues 16–36 (VLYWIPVVFISLLLGWSYYAY). Residues 37–47 (AIQLCIVSMEN) lie on the Lumenal side of the membrane. The chain crosses the membrane as a helical span at residues 48 to 68 (IGEQVVCLMAYHLLFAMFVWS). At 69 to 169 (YWKTIFTLPM…NNCVGFSNYK (101 aa)) the chain is on the cytoplasmic side. In terms of domain architecture, DHHC spans 126 to 176 (RYCDRCRLIKPDRCHHCSVCDKCILKMDHHCPWVNNCVGFSNYKFFLLFLA). The active-site S-palmitoyl cysteine intermediate is the cysteine 156. Residues 170–190 (FFLLFLAYSLLYCLFIAATDL) traverse the membrane as a helical segment. The Lumenal portion of the chain corresponds to 191 to 207 (QYFIRFWTNGLPDTQAK). A helical membrane pass occupies residues 208 to 228 (FHIMFLFFAAAMFSVSLSSLF). Residues 229–366 (GYHCWLVSKN…NPALTMENET (138 aa)) lie on the Cytoplasmic side of the membrane. 2 stretches are compositionally biased toward polar residues: residues 297-316 (VNQDPEQPSTPAGLNSTAKN) and 332-349 (SHLLTDSQTWTENSSNSG). The tract at residues 297-366 (VNQDPEQPST…NPALTMENET (70 aa)) is disordered. The mediates localization to plasma membrane and recycling endosomes stretch occupies residues 298 to 366 (NQDPEQPSTP…NPALTMENET (69 aa)). The Non-canonical dileucine endocytic signal signature appears at 334–335 (LL). The short motif at 357–360 (NPAL) is the NPxY-like endocytic signal element.

It belongs to the DHHC palmitoyltransferase family. In terms of assembly, monomer. Homodimer. The monomeric form has a higher catalytic activity. Autopalmitoylated.

Its subcellular location is the postsynaptic density. The protein resides in the postsynaptic recycling endosome membrane. It is found in the cell membrane. It localises to the endoplasmic reticulum membrane. The protein localises to the golgi apparatus membrane. It carries out the reaction L-cysteinyl-[protein] + hexadecanoyl-CoA = S-hexadecanoyl-L-cysteinyl-[protein] + CoA. The enzyme catalyses L-cysteinyl-[protein] + tetradecanoyl-CoA = S-tetradecanoyl-L-cysteinyl-[protein] + CoA. It catalyses the reaction L-cysteinyl-[protein] + octadecanoyl-CoA = S-octadecanoyl-L-cysteinyl-[protein] + CoA. In terms of biological role, palmitoyltransferase that catalyzes the addition of palmitate onto various protein substrates and is involved in a variety of cellular processes. Has no stringent fatty acid selectivity and in addition to palmitate can also transfer onto target proteins myristate from tetradecanoyl-CoA and stearate from octadecanoyl-CoA. In the nervous system, plays a role in long term synaptic potentiation by palmitoylating AKAP5 through which it regulates protein trafficking from the dendritic recycling endosomes to the plasma membrane and controls both structural and functional plasticity at excitatory synapses. In dendrites, mediates the palmitoylation of DLG4 when synaptic activity decreases and induces synaptic clustering of DLG4 and associated AMPA-type glutamate receptors. Also mediates the de novo and turnover palmitoylation of RGS7BP, a shuttle for Gi/o-specific GTPase-activating proteins/GAPs, promoting its localization to the plasma membrane in response to the activation of G protein-coupled receptors. Through the localization of these GTPase-activating proteins/GAPs, it also probably plays a role in G protein-coupled receptors signaling in neurons. Also probably plays a role in cell adhesion by palmitoylating CD9 and CD151 to regulate their expression and function. Palmitoylates the endoplasmic reticulum protein CKAP4 and regulates its localization to the plasma membrane. Could also palmitoylate LCK and regulate its localization to the plasma membrane. This chain is Palmitoyltransferase ZDHHC2, found in Rattus norvegicus (Rat).